A 455-amino-acid chain; its full sequence is Retinoic acid receptor beta (455 aa).

Residues 1-87 (MTTSGHACPV…PLPPPRVYKP (87 aa)) form a modulating region. Residues 47–78 (HPPPSGCSTPSPATIETQSTSSEELVPSPPSP) are disordered. Residues 53–66 (CSTPSPATIETQST) are compositionally biased toward polar residues. At Ser77 the chain carries Phosphoserine. 2 NR C4-type zinc fingers span residues 88 to 108 (CFVC…CEGC) and 124 to 148 (CHRD…LQKC). Positions 88 to 153 (CFVCQDKSSG…RLQKCFEVGM (66 aa)) form a DNA-binding region, nuclear receptor. The segment at 154–182 (SKESVRNDRNKKKKETSKQECTESYEMTA) is hinge. The NR LBD domain maps to 183–417 (ELDDLTEKIR…PLIQEMLENS (235 aa)). The disordered stretch occupies residues 415 to 455 (ENSEGHEPLTPSSSGNTAEHSPSISPSSVENSGVSQSPLVQ). The segment covering 424–434 (TPSSSGNTAEH) has biased composition (polar residues). The span at 435–455 (SPSISPSSVENSGVSQSPLVQ) shows a compositional bias: low complexity.

It belongs to the nuclear hormone receptor family. NR1 subfamily. As to quaternary structure, homodimer. Heterodimer; with a RXR molecule. Binds DNA preferentially as a RAR/RXR heterodimer. Heterodimerizes (via NR LBD) with RXRA. Interacts weakly with NCOR2. As to expression, expressed in aortic endothelial cells (at protein level).

The protein localises to the nucleus. It is found in the cytoplasm. Its function is as follows. Receptor for retinoic acid. Retinoic acid receptors bind as heterodimers to their target response elements in response to their ligands, all-trans or 9-cis retinoic acid, and regulate gene expression in various biological processes. The RXR/RAR heterodimers bind to the retinoic acid response elements (RARE) composed of tandem 5'-AGGTCA-3' sites known as DR1-DR5. In the absence or presence of hormone ligand, acts mainly as an activator of gene expression due to weak binding to corepressors. The RXRA/RARB heterodimer can act as a repressor on the DR1 element and as an activator on the DR5 element. In concert with RARG, required for skeletal growth, matrix homeostasis and growth plate function. The polypeptide is Retinoic acid receptor beta (RARB) (Homo sapiens (Human)).